The primary structure comprises 674 residues: Methionine--tRNA ligase (674 aa).

Positions 11–21 (PYANGDLHLGH) match the 'HIGH' region motif. Residues Cys-142, Cys-145, Cys-155, and Cys-158 each contribute to the Zn(2+) site. The short motif at 330-334 (KMSKS) is the 'KMSKS' region element. Residue Lys-333 participates in ATP binding. One can recognise a tRNA-binding domain in the interval 574-674 (DFMKVDLRIA…EGAQPGMRVK (101 aa)).

It belongs to the class-I aminoacyl-tRNA synthetase family. MetG type 1 subfamily. As to quaternary structure, homodimer. Zn(2+) serves as cofactor.

The protein resides in the cytoplasm. It carries out the reaction tRNA(Met) + L-methionine + ATP = L-methionyl-tRNA(Met) + AMP + diphosphate. Functionally, is required not only for elongation of protein synthesis but also for the initiation of all mRNA translation through initiator tRNA(fMet) aminoacylation. The chain is Methionine--tRNA ligase from Francisella tularensis subsp. holarctica (strain FTNF002-00 / FTA).